A 622-amino-acid chain; its full sequence is Pyranose 2-oxidase (622 aa).

A signal peptide spans 1–28; that stretch reads MSASSSDPFHSFAKTSFTSKAAKRATAH. Residues 29-37 constitute a propeptide that is removed on maturation; it reads SLPPLPGPG. Histidine 167 bears the Tele-8alpha-FAD histidine mark. Residues glutamine 449 and histidine 451 each contribute to the substrate site. The Proton acceptor role is filled by histidine 546. Residue asparagine 591 is part of the active site.

It belongs to the GMC oxidoreductase family. As to quaternary structure, homotetramer. FAD serves as cofactor. Not glycosylated.

Its subcellular location is the periplasm. The enzyme catalyses D-glucose + O2 = 2-dehydro-D-glucose + H2O2. In terms of biological role, catalyzes the oxidation of various aldopyranoses and disaccharides on carbon-2 to the corresponding 2-keto sugars concomitant with the reduction of O(2) to H(2)O(2). Plays an important role in lignin degradation of wood rot fungi by supplying the essential cosubstrate H(2)O(2) for the ligninolytic peroxidases, lignin peroxidase and manganese-dependent peroxidase. The preferred substrate is D-glucose which is converted to 2-dehydro-D-glucose, an intermediate of a secondary metabolic pathway leading to the antibiotic cortalcerone. Also acts on D-xylose, together with D-glucose the major sugars derived from wood, on L-sorbose, D-galactose and 1,5-anhydroglucitol, a diagnostic marker of diabetes mellitus. The sequence is that of Pyranose 2-oxidase (p2ox) from Phlebiopsis gigantea (White-rot fungus).